The sequence spans 502 residues: Galactose/methyl galactoside import ATP-binding protein MglA (502 aa).

ABC transporter domains follow at residues 10–245 and 255–502; these read LEMT…VGRE and NEPK…SRYL. ATP is bound at residue 42 to 49; that stretch reads GENGAGKS.

It belongs to the ABC transporter superfamily. Galactose/methyl galactoside importer (TC 3.A.1.2.3) family. The complex is composed of one ATP-binding protein (MglA), two transmembrane proteins (MglC) and a solute-binding protein (MglB).

It localises to the cell inner membrane. The enzyme catalyses D-galactose(out) + ATP + H2O = D-galactose(in) + ADP + phosphate + H(+). It carries out the reaction methyl beta-D-galactoside(out) + ATP + H2O = methyl beta-D-galactoside(in) + ADP + phosphate + H(+). Functionally, part of the ABC transporter complex MglABC involved in galactose/methyl galactoside import. Responsible for energy coupling to the transport system. This is Galactose/methyl galactoside import ATP-binding protein MglA from Vibrio cholerae serotype O1 (strain ATCC 39315 / El Tor Inaba N16961).